The chain runs to 118 residues: Large ribosomal subunit protein bL20 (118 aa).

It belongs to the bacterial ribosomal protein bL20 family.

Its function is as follows. Binds directly to 23S ribosomal RNA and is necessary for the in vitro assembly process of the 50S ribosomal subunit. It is not involved in the protein synthesizing functions of that subunit. The sequence is that of Large ribosomal subunit protein bL20 from Clostridioides difficile (strain 630) (Peptoclostridium difficile).